A 696-amino-acid chain; its full sequence is Potassium voltage-gated channel subfamily KQT member 4 (696 aa).

The segment at 1 to 20 (MAEAPPRRLGLGPPPGDAPR) is disordered. Residues 1-97 (MAEAPPRRLG…VYNVLERPRG (97 aa)) lie on the Cytoplasmic side of the membrane. Arginine 94 provides a ligand contact to a 1,2-diacyl-sn-glycero-3-phospho-(1D-myo-inositol-4,5-bisphosphate). The helical transmembrane segment at 98–119 (WAFVYHVFIFLLVFSCLVLSVL) threads the bilayer. Residues 120 to 130 (STIQEHQELAN) lie on the Extracellular side of the membrane. Residues 131–153 (ECLLILEFVMIVVFGLEYIIRVW) form a helical membrane-spanning segment. Residues 154–169 (SAGCCCRYRGWQGRFR) are Cytoplasmic-facing. Residues 170-192 (FARKPFCVIDFIVFVASVAVIAA) form a helical membrane-spanning segment. An a 1,2-diacyl-sn-glycero-3-phospho-(1D-myo-inositol-4,5-bisphosphate)-binding site is contributed by lysine 173. The Extracellular portion of the chain corresponds to 193 to 203 (GTQGNIFATSA). A helical; Voltage-sensor membrane pass occupies residues 204 to 224 (LRSMRFLQILRMVRMDRRGGT). The a 1,2-diacyl-sn-glycero-3-phospho-(1D-myo-inositol-4,5-bisphosphate) site is built by arginine 220, arginine 221, lysine 226, and serine 236. Over 225 to 236 (WKLLGSVVYAHS) the chain is Cytoplasmic. The helical transmembrane segment at 237-259 (KELITAWYIGFLVLIFASFLVYL) threads the bilayer. Topologically, residues 260-271 (AEKDANSDFSSY) are extracellular. Positions 272–293 (ADSLWWGTITLTTIGYGDKTPH) form an intramembrane region, pore-forming. Residue threonine 294 is a topological domain, extracellular. A helical transmembrane segment spans residues 295-323 (WLGRVLAAGFALLGISFFALPAGILGSGF). The Cytoplasmic portion of the chain corresponds to 324 to 696 (ALKVQEQHRQ…ISRSVSTNMD (373 aa)). 2 residues coordinate a 1,2-diacyl-sn-glycero-3-phospho-(1D-myo-inositol-4,5-bisphosphate): histidine 331 and lysine 334. The segment at 343-352 (AANLIQAAWR) is interaction with CALM. Positions 445–484 (SSQKRTGPSKQHLAPPPIPTSPSSEQVGEASSPSKVQKSW) are disordered. The segment covering 465–484 (SPSSEQVGEASSPSKVQKSW) has biased composition (polar residues). The interval 536-550 (RSVRILKFLVAKRKF) is interaction with CALM. The interval 547 to 651 (KRKFKETLRP…SRCLRSGTSA (105 aa)) is C-terminal assembly domain (tetramerization). Positions 589-609 (GRGPGDRKTREKGDKGPSDTE) are disordered. A compositionally biased stretch (basic and acidic residues) spans 592-606 (PGDRKTREKGDKGPS). Residues 610–645 (AVDEISMMGRVVKVEKQVQSIEHKLDLLLGFYSRCL) adopt a coiled-coil conformation.

It belongs to the potassium channel family. KQT (TC 1.A.1.15) subfamily. Kv7.4/KCNQ4 sub-subfamily. Homotetramer. Interacts (via C-terminus) with calmodulin; forms a heterooctameric structure (with 4:4 KCNQ1:CALM stoichiometry); the interaction is calcium-independent, constitutive, participates in the proper assembly of a functional channel. The interaction with calcium-free CALM controls channel trafficking whereas interaction with calcium-bound CALM regulates channel gating. May form a functional heteromultimeric channel with KCNQ3. Interacts with HSP90AB1; promotes cell surface expression of KCNQ4. In terms of tissue distribution, in the inner ear expressed in the outer sensory hair cells of the cochlea and in type I hair cells of the vestibular organs. Also expressed in the postsynaptic membrane of the calyx nerve endings innervating type I cells. In the brain expressed in neurons of many, but not all, nuclei of the central auditory pathway. Absent from most other brain regions.

It is found in the basal cell membrane. It catalyses the reaction K(+)(in) = K(+)(out). With respect to regulation, two molecules of phosphatidylinositol-4,5-bisphosphate (PIP2-I and PIP2-II) are essential to activate KCNQ4 channel by inducing the coupling of the voltage-sensing domain (VSD) and the pore-forming domain (PD). Upon channel activation, PIP2-I and PIP2-II disrupt the VSD-calmodulin/CALM interaction, causing the release of CALM from the VSD which triggers the opening of the gate. Calcium suppresses KCNQ4 channel current through calcium-bound CALM C-terminus. Therefore CALM acts as calcium sensor that controls channel activity. Functionally, pore-forming subunit of the voltage-gated potassium (Kv) channel involved in the regulation of sensory cells excitability in the cochlea. KCNQ4/Kv7.4 channel is composed of 4 pore-forming subunits assembled as tetramers. Promotes the outflow of potassium ions in the repolarization phase of action potential which plays a role in regulating membrane potential of excitable cells. The channel conducts a slowly activating and deactivating current. Current often shows some inward rectification at positive potentials. Channel may be selectively permeable in vitro to other cations besides potassium, in decreasing order of affinity K(+) = Rb(+) &gt; Cs(+) &gt; Na(+). Important for normal physiological function of inner ear such as sensory perception of sound. In Mus musculus (Mouse), this protein is Potassium voltage-gated channel subfamily KQT member 4.